Here is a 316-residue protein sequence, read N- to C-terminus: Ribosomal RNA small subunit methyltransferase H (316 aa).

Residues alanine 35–histidine 37, aspartate 55, phenylalanine 84, aspartate 105, and glutamine 112 contribute to the S-adenosyl-L-methionine site.

This sequence belongs to the methyltransferase superfamily. RsmH family.

The protein resides in the cytoplasm. It catalyses the reaction cytidine(1402) in 16S rRNA + S-adenosyl-L-methionine = N(4)-methylcytidine(1402) in 16S rRNA + S-adenosyl-L-homocysteine + H(+). Functionally, specifically methylates the N4 position of cytidine in position 1402 (C1402) of 16S rRNA. The polypeptide is Ribosomal RNA small subunit methyltransferase H (Streptococcus pneumoniae (strain ATCC 700669 / Spain 23F-1)).